A 114-amino-acid polypeptide reads, in one-letter code: Protein ORF3 (114 aa).

Hydrophobic regions lie at residues 6 to 22 (CALG…CLCC) and 33 to 53 (AVVG…GLIL). An interaction with host HPX region spans residues 28–68 (VSRLAAVVGGAAAVPAVVSGVTGLILSPSQSPIFIQPTPLP). A homodimerization, and interaction with host AMBP/bikunin region spans residues 72 to 114 (PLRPGLDLAFANQPGHLAPLGEIRPSAPPLPPVADLPQPGLRR). The interval 91–114 (LGEIRPSAPPLPPVADLPQPGLRR) is disordered. The interval 95-104 (RPSAPPLPPV) is interaction with host SRC, HCK, FYN, PIK3R3 and GRB2. Residues 96-99 (PSAP) carry the PTAP/PSAP motif motif.

The protein belongs to the hepevirus ORF3 protein family. In terms of assembly, forms homooligomers. Interacts with host SRC, HCK, FYN, PIK3R3 and GRB2 (via SH3 domain); binding does not activate the kinases. Interacts with host AMBP/bikunin and AMBP/alpha-1-microglobulin peptides. Interacts with host HPX/hemopexin. Interacts (when phosphorylated) with capsid protein ORF2. Interacts with host TSG101; this interaction plays a role in viral release from the host cell. Interacts with host SIRPA; this interaction down-regulates the phosphorylation of host IRF3. In terms of processing, palmitoylated in the N-terminus.

Its subcellular location is the host endoplasmic reticulum membrane. It is found in the host cytoplasm. It localises to the host cytoskeleton. The protein localises to the virion. The protein resides in the host cell membrane. Functionally, small multifunctional phosphoprotein involved in virion morphogenesis, egress and counteracting host innate immunity. Plays critical roles in the final steps of viral release by interacting with host TSG101, a member of the vacuolar protein-sorting pathway and using other cellular host proteins involved in vesicle formation pathway. Also acts as a viroporin and forms ion conductive pores allowing viral particle release. Impairs the generation of type I interferon by down-regulating host TLR3 and TLR7 as well as their downstream signaling pathways. Down-regulates the phosphorylation of host IRF3 via the interaction with host SIRP-alpha, thereby inhibiting IFN-I expression. Interacts with host microtubules. In Hepatitis E virus genotype 2 (isolate Human/Mexico) (HEV-2), this protein is Protein ORF3.